Here is a 1099-residue protein sequence, read N- to C-terminus: MEILYTEITQDLTEGLLEIALEELEKNRKVYYIVPSSMSFEKEKEILERLAKGSDTAVFYLLVTRFKQLPYYFDKREKATMKTELGTVGLSMLFRRILRSFKKDEIPLYFSLQDSAGFLEMLIQLRAELLTANLSVENLPDNPKNQELKKILTTFEAELSVEYANYSEFGDFTNRLADGEFDQQLKDVTIIIDGYTRFSAEEELFIESIQEKVARFVVGTYSDENSLTAGSETIYVGTSQMITRFRNKYPVELRKIASSSVNEVYSKLTRMLDLDSRFVITDEKIELKAEDEKYFRIWEAENQKVEIERVAKEIRQKISQGAFFKDFTVLVGDPAAYEITLKEIFDLYEIPFFYAQEESMSQHPLVIFFESLFAIKKNNYRTDDVVNLLKSKVYTDVNLDEEVIDYFEYYVQKYKISGRKKFTEEFIESEFSQIELVNEMREKLLGSESPLQVFLGNNRQKTGKKWVSDLQALLENGNVMANMNAYFSAAELQNEHQMADKHEQVWQMLISTLNEFFAVFSDEKLKSVEFLDILLAGLKNAKYRQIPANVDVVNVKDYELVEPKTNNYIYAIGLSQTNFPRIKKNSTLLSDEERLEINQTTDENQFIEQLNVANYQKNQFTVLSLINSAKESLVLSMPQIMTNEQGEFSPVFQLFLKDADEKILQKIQGVNLFESLEHIGNSRSVIAMIGQIERELVESEETNEDKRVFWSSIFRILVKSNADFQKILLDLAKDIDTVNLAPDTLEQIYGDKIYASVSSFERFYNCEYQYFLENTLSLETFENIDINSKIVGNFFHEVFEKVMKETDLSAENFDEKLTLFLQEVDKNYSRYFTQDATARFTWSNLEEIVRQTATVLKATVSTDELKTLLTESSFGLSKSELGNFSVDDIYLRGRIDRLDQLSTDYLGVIDYKSSAHSFKLQEAYDGLSLQFMTYLDVIKQAFPNQKIWGALYLQFKNQPINLSEINQLSEIANILKESMRYDGLVLEDAAEQIKGIENIALKNTNSYNEEEFEQLLKLNEEHYRAAGQRLKNGKIAINPIMKRSEGIDQSGNVRGCRYCPLKSICRFEANIHMNEHSREIGQKSQAEILAELKGEGRDE.

[4Fe-4S] cluster contacts are provided by Cys-766, Cys-1056, Cys-1059, and Cys-1065.

The protein belongs to the helicase family. AddB/RexB type 2 subfamily. In terms of assembly, heterodimer of AddA and RexB. The cofactor is Mg(2+). It depends on [4Fe-4S] cluster as a cofactor.

In terms of biological role, the heterodimer acts as both an ATP-dependent DNA helicase and an ATP-dependent, dual-direction single-stranded exonuclease. Recognizes the chi site generating a DNA molecule suitable for the initiation of homologous recombination. This subunit has 5' -&gt; 3' nuclease activity but not helicase activity. This Lactococcus lactis subsp. cremoris (strain SK11) protein is ATP-dependent helicase/deoxyribonuclease subunit B.